A 337-amino-acid polypeptide reads, in one-letter code: Trace amine-associated receptor 5 (337 aa).

The Extracellular portion of the chain corresponds to 1–38; it reads MRAVLLPGSGEQPTAFCYQVNGSCPRTVHPLAIQVVIY. Asn21 carries N-linked (GlcNAc...) asparagine glycosylation. Intrachain disulfides connect Cys24/Cys188 and Cys99/Cys192. A helical transmembrane segment spans residues 39-59; that stretch reads LACAVGVLITVLGNLFVVFAV. Over 60–70 the chain is Cytoplasmic; sequence SYFKVLHTPTN. A helical membrane pass occupies residues 71–91; it reads FLLLSLALADMLLGLLVLPLS. Residues 92 to 109 lie on the Extracellular side of the membrane; it reads TVRSVESCWFFGDFLCRL. The chain crosses the membrane as a helical span at residues 110–130; sequence HTYLDTLFCLTSIFHLCFISI. Over 131-154 the chain is Cytoplasmic; that stretch reads DRHCAICDPLLYPSKFTVRTALRY. A helical membrane pass occupies residues 155 to 175; sequence IVAGWGIPAAYTAFFLYTDVV. An extracellular Loop 2 (ECL2) region spans residues 176–189; it reads ERALSQWLEEMPCV. Residues 176-204 are Extracellular-facing; that stretch reads ERALSQWLEEMPCVGSCQLLFNKFWGWLN. The chain crosses the membrane as a helical span at residues 205–225; it reads FPAFFVPCLIMISLYLKIFVV. The Cytoplasmic portion of the chain corresponds to 226-253; the sequence is ATRQAQQIRTLSQSLAGAVKRERKAAKT. A helical membrane pass occupies residues 254–274; it reads LGIAVGIYLVCWLPFTVDTLV. The Extracellular portion of the chain corresponds to 275–284; the sequence is DSLLNFITPP. A helical transmembrane segment spans residues 285–307; sequence LVFDIFIWFAYFNSACNPIIYVF. Residues 308–337 lie on the Cytoplasmic side of the membrane; the sequence is SYRWFRKALKLLLSREIFSPRTPTVDLYHD.

Belongs to the G-protein coupled receptor 1 family. As to expression, specifically expressed in neurons of the olfactory epithelium, to discrete glomeruli predominantly localized to a confined bulb region. Present in the dorsal area of the main olfactory epithelium. Also present in the limbic brain areas receiving projection from the olfactory system and involved in the regulation of emotions. Also expressed in some brain regions outside the olfactory epithelium, such as the hippocampus, cerebellum, cortex, raphe nuclei, hypothalamus, and habenula.

The protein localises to the cell membrane. Its activity is regulated as follows. Inhibited by 1-[(5,5- diphenyloxolan-2-yl)methyl]-4-(2-methoxyphenyl)piperazine and N-[(2,2-diphenyl-1,3-dioxolan-4-yl)methyl]-2-(2- methoxyphenoxy)ethan-1-amine small molecules. Its function is as follows. Olfactory receptor specific for trimethylamine, a trace amine enriched in the urine of male mice, playing a role in social behavior. Also activated by N-methylpiperidine. Trimethylamine is present at high concentration in the urine of male mice after puberty and acts as an attractant. Trimethylamine-binding causes a conformation change that triggers signaling via G(s)-class of G alpha proteins (GNAL or GNAS). Also required to provide olfactory input into limbic brain areas to regulate emotional behaviors likely via modulation of the serotonin system. This is Trace amine-associated receptor 5 from Mus musculus (Mouse).